Consider the following 473-residue polypeptide: Digalactosyldiacylglycerol synthase 2, chloroplastic (473 aa).

Interaction with the membrane lipid bilayer stretches follow at residues 130–148 (LTWF…YVIG) and 227–245 (QPFT…SKGY).

This sequence belongs to the glycosyltransferase group 1 family. Glycosyltransferase 4 subfamily. In terms of tissue distribution, expressed in leaves, flowers and roots, but not in stems and siliques.

Its subcellular location is the plastid. The protein resides in the chloroplast outer membrane. It carries out the reaction a 1,2-diacyl-3-O-(beta-D-galactosyl)-sn-glycerol + UDP-alpha-D-galactose = a 1,2-diacyl-3-O-[alpha-D-galactosyl-(1-&gt;6)-beta-D-galactosyl]-sn-glycerol + UDP + H(+). Its activity is regulated as follows. Stimulated by anionic phospholipids. Functionally, involved in the synthesis of diacylglycerol galactolipids that are specifically found in thylakoid membranes. Specific for alpha-glycosidic linkages. During phosphate shortage, involved in the biosynthesis of digalactosyldiacylglycerol (DGDG) which rescues the limitation of phospholipids. In Arabidopsis thaliana (Mouse-ear cress), this protein is Digalactosyldiacylglycerol synthase 2, chloroplastic.